The sequence spans 186 residues: Ribosome-recycling factor (186 aa).

Belongs to the RRF family.

It is found in the cytoplasm. Functionally, responsible for the release of ribosomes from messenger RNA at the termination of protein biosynthesis. May increase the efficiency of translation by recycling ribosomes from one round of translation to another. The protein is Ribosome-recycling factor of Coprothermobacter proteolyticus (strain ATCC 35245 / DSM 5265 / OCM 4 / BT).